Here is a 278-residue protein sequence, read N- to C-terminus: MHYLPVAIVTGATRGIGKAICQKLFQKGLSCIILGSTKESIERTAIDRGQLQSGLSYQRQCAIAIDFKKWPHWLDYESYDGIEYFKDRPPLKQKYSTLFDPCNKWSNNERRYYVNLLINCAGLTQESLSVRTTASQIQDIMNVNFMSPVTMTNICIKYMMKSQRRWPELSGQSARPTIVNISSILHSGKMKVPGTSVYSASKAALSRFTEVLAAEMEPRNIRCFTISPGLVKGTDMIQNLPVEAKEMLERTIGASGTSAPAEIAEEVWSLYSRTALET.

NADP(+)-binding residues include threonine 13, arginine 14, isoleucine 16, serine 36, serine 40, threonine 44, aspartate 66, phenylalanine 67, glutamate 77, glycine 122, glutamine 125, and glutamate 126. The active-site Proton donor is serine 182. Residues tyrosine 198, lysine 202, leucine 230, and valine 231 each contribute to the NADP(+) site. Tyrosine 198 functions as the Proton acceptor in the catalytic mechanism. Lysine 202 acts as the Lowers pKa of active site Tyr in catalysis.

The protein belongs to the short-chain dehydrogenases/reductases (SDR) family.

It localises to the mitochondrion. It catalyses the reaction a (3R)-hydroxyacyl-[ACP] + NADP(+) = a 3-oxoacyl-[ACP] + NADPH + H(+). It functions in the pathway lipid metabolism; fatty acid biosynthesis. Involved in biosynthesis of fatty acids in mitochondria. The chain is 3-oxoacyl-[acyl-carrier-protein] reductase (OAR1) from Saccharomyces cerevisiae (strain ATCC 204508 / S288c) (Baker's yeast).